Here is a 129-residue protein sequence, read N- to C-terminus: UPF0325 protein ECA1027 (129 aa).

Belongs to the UPF0325 family.

The polypeptide is UPF0325 protein ECA1027 (Pectobacterium atrosepticum (strain SCRI 1043 / ATCC BAA-672) (Erwinia carotovora subsp. atroseptica)).